The chain runs to 201 residues: Small ribosomal subunit protein uS4c (201 aa).

Residues 20–44 (GLTSKRPKAGSDLRNQSRSGKKSQY) are disordered. An S4 RNA-binding domain is found at 89 to 152 (MRLDNILFRL…NSRTLVQNLL (64 aa)).

The protein belongs to the universal ribosomal protein uS4 family. Part of the 30S ribosomal subunit. Contacts protein S5. The interaction surface between S4 and S5 is involved in control of translational fidelity.

The protein resides in the plastid. It localises to the chloroplast. Functionally, one of the primary rRNA binding proteins, it binds directly to 16S rRNA where it nucleates assembly of the body of the 30S subunit. With S5 and S12 plays an important role in translational accuracy. This is Small ribosomal subunit protein uS4c (rps4) from Barbarea verna (Land cress).